The chain runs to 427 residues: Isocitrate dehydrogenase [NADP] (427 aa).

Residue T114 participates in NADP(+) binding. Residues S123, N125, R129, R139, and R163 each coordinate D-threo-isocitrate. D317 contacts Mg(2+). Residues 349 to 355 (HGTAPKY), N362, Y401, and R405 contribute to the NADP(+) site.

The protein belongs to the isocitrate and isopropylmalate dehydrogenases family. As to quaternary structure, homodimer. Mg(2+) is required as a cofactor. Mn(2+) serves as cofactor.

It catalyses the reaction D-threo-isocitrate + NADP(+) = 2-oxoglutarate + CO2 + NADPH. Catalyzes the oxidative decarboxylation of isocitrate to 2-oxoglutarate and carbon dioxide with the concomitant reduction of NADP(+). This Coxiella burnetii (strain RSA 493 / Nine Mile phase I) protein is Isocitrate dehydrogenase [NADP] (icd).